Here is a 426-residue protein sequence, read N- to C-terminus: Glutamate-1-semialdehyde 2,1-aminomutase (426 aa).

K265 is subject to N6-(pyridoxal phosphate)lysine.

It belongs to the class-III pyridoxal-phosphate-dependent aminotransferase family. HemL subfamily. As to quaternary structure, homodimer. Pyridoxal 5'-phosphate serves as cofactor.

It is found in the cytoplasm. The enzyme catalyses (S)-4-amino-5-oxopentanoate = 5-aminolevulinate. It functions in the pathway porphyrin-containing compound metabolism; protoporphyrin-IX biosynthesis; 5-aminolevulinate from L-glutamyl-tRNA(Glu): step 2/2. The chain is Glutamate-1-semialdehyde 2,1-aminomutase from Salmonella newport (strain SL254).